We begin with the raw amino-acid sequence, 238 residues long: Uridylate kinase (238 aa).

Residue 12–15 participates in ATP binding; that stretch reads KLSG. Residue glycine 54 coordinates UMP. The ATP site is built by glycine 55 and arginine 59. UMP is bound by residues aspartate 74 and 135-142; that span reads TGNPFFTT. Residues threonine 162, tyrosine 168, and aspartate 171 each contribute to the ATP site.

Belongs to the UMP kinase family. Homohexamer.

Its subcellular location is the cytoplasm. The catalysed reaction is UMP + ATP = UDP + ADP. The protein operates within pyrimidine metabolism; CTP biosynthesis via de novo pathway; UDP from UMP (UMPK route): step 1/1. Its activity is regulated as follows. Inhibited by UTP. Catalyzes the reversible phosphorylation of UMP to UDP. This Bordetella bronchiseptica (strain ATCC BAA-588 / NCTC 13252 / RB50) (Alcaligenes bronchisepticus) protein is Uridylate kinase.